Reading from the N-terminus, the 721-residue chain is Catalase-peroxidase (721 aa).

Positions 89–212 (WHSAGTYRTG…LAAVQMGLIY (124 aa)) form a cross-link, tryptophyl-tyrosyl-methioninium (Trp-Tyr) (with M-238). His90 acts as the Proton acceptor in catalysis. Positions 212 to 238 (YVNPEGPNGDPDPFAAAVDIRETFARM) form a cross-link, tryptophyl-tyrosyl-methioninium (Tyr-Met) (with W-89). Heme b is bound at residue His253.

It belongs to the peroxidase family. Peroxidase/catalase subfamily. As to quaternary structure, homodimer or homotetramer. Heme b serves as cofactor. Formation of the three residue Trp-Tyr-Met cross-link is important for the catalase, but not the peroxidase activity of the enzyme.

It catalyses the reaction H2O2 + AH2 = A + 2 H2O. It carries out the reaction 2 H2O2 = O2 + 2 H2O. Functionally, bifunctional enzyme with both catalase and broad-spectrum peroxidase activity. This chain is Catalase-peroxidase, found in Shewanella baltica (strain OS195).